The chain runs to 297 residues: RNA polymerase sigma-F factor (297 aa).

The interval 1 to 46 is disordered; that stretch reads MTVPASTAPQVPPQQDPQVPHPQEPREEPHEEPPSPPAAPRPQSRG. The span at 10 to 22 shows a compositional bias: pro residues; that stretch reads QVPPQQDPQVPHP. The span at 23–33 shows a compositional bias: basic and acidic residues; sequence QEPREEPHEEP. Positions 101–114 match the Polymerase core binding motif; it reads DVVQVGTIGLINAI. The H-T-H motif DNA-binding region spans 264–283; that stretch reads QSQISAELGVSQMHVSRLLA.

Belongs to the sigma-70 factor family. SigB subfamily.

Its function is as follows. Sigma factors are initiation factors that promote the attachment of RNA polymerase to specific initiation sites and are then released. This sigma factor is required for normal spore maturation. This Kitasatospora aureofaciens (Streptomyces aureofaciens) protein is RNA polymerase sigma-F factor (sigF).